A 120-amino-acid chain; its full sequence is Large ribosomal subunit protein uL18 (120 aa).

It belongs to the universal ribosomal protein uL18 family. In terms of assembly, part of the 50S ribosomal subunit; part of the 5S rRNA/L5/L18/L25 subcomplex. Contacts the 5S and 23S rRNAs.

In terms of biological role, this is one of the proteins that bind and probably mediate the attachment of the 5S RNA into the large ribosomal subunit, where it forms part of the central protuberance. In Lawsonia intracellularis (strain PHE/MN1-00), this protein is Large ribosomal subunit protein uL18.